Consider the following 561-residue polypeptide: Mercuric reductase (561 aa).

The 65-residue stretch at 1–65 folds into the HMA domain; that stretch reads MTTLKITGMT…AVAGLGYEAT (65 aa). Cys-11 and Cys-14 together coordinate a metal cation. Residues Ala-110, Gly-130, and Thr-135 each coordinate FAD. Residues Cys-136 and Cys-141 are joined by a disulfide bond. Positions 145, 211, 403, and 411 each coordinate FAD. Hg(2+) is bound by residues Cys-558 and Cys-559.

It belongs to the class-I pyridine nucleotide-disulfide oxidoreductase family. As to quaternary structure, homodimer. It depends on FAD as a cofactor.

It carries out the reaction Hg + NADP(+) + H(+) = Hg(2+) + NADPH. Its function is as follows. Resistance to Hg(2+) in bacteria appears to be governed by a specialized system which includes mercuric reductase. MerA protein is responsible for volatilizing mercury as Hg(0). In Enterobacter agglomerans (Erwinia herbicola), this protein is Mercuric reductase (merA).